Here is a 348-residue protein sequence, read N- to C-terminus: Spermidine/putrescine import ATP-binding protein PotA (348 aa).

One can recognise an ABC transporter domain in the interval 6–236 (IRLVNVTKEY…PKNVFVADFI (231 aa)). 38 to 45 (GPSGCGKT) is an ATP binding site.

It belongs to the ABC transporter superfamily. Spermidine/putrescine importer (TC 3.A.1.11.1) family. In terms of assembly, the complex is composed of two ATP-binding proteins (PotA), two transmembrane proteins (PotB and PotC) and a solute-binding protein (PotD).

It is found in the cell membrane. The enzyme catalyses ATP + H2O + polyamine-[polyamine-binding protein]Side 1 = ADP + phosphate + polyamineSide 2 + [polyamine-binding protein]Side 1.. Its function is as follows. Part of the ABC transporter complex PotABCD involved in spermidine/putrescine import. Responsible for energy coupling to the transport system. The chain is Spermidine/putrescine import ATP-binding protein PotA from Desulfitobacterium hafniense (strain Y51).